The sequence spans 476 residues: Bifunctional protein HldE (476 aa).

A ribokinase region spans residues 1–319; that stretch reads MAQYSAQFPH…NAIHGRTVSG (319 aa). 195-198 lines the ATP pocket; that stretch reads NMSE. Residue Asp-264 is part of the active site. Positions 344–476 are cytidylyltransferase; it reads MTNGCFDILH…VIKKIRDLKD (133 aa).

It in the N-terminal section; belongs to the carbohydrate kinase PfkB family. The protein in the C-terminal section; belongs to the cytidylyltransferase family. Homodimer.

It carries out the reaction D-glycero-beta-D-manno-heptose 7-phosphate + ATP = D-glycero-beta-D-manno-heptose 1,7-bisphosphate + ADP + H(+). The catalysed reaction is D-glycero-beta-D-manno-heptose 1-phosphate + ATP + H(+) = ADP-D-glycero-beta-D-manno-heptose + diphosphate. Its pathway is nucleotide-sugar biosynthesis; ADP-L-glycero-beta-D-manno-heptose biosynthesis; ADP-L-glycero-beta-D-manno-heptose from D-glycero-beta-D-manno-heptose 7-phosphate: step 1/4. It participates in nucleotide-sugar biosynthesis; ADP-L-glycero-beta-D-manno-heptose biosynthesis; ADP-L-glycero-beta-D-manno-heptose from D-glycero-beta-D-manno-heptose 7-phosphate: step 3/4. Its function is as follows. Catalyzes the phosphorylation of D-glycero-D-manno-heptose 7-phosphate at the C-1 position to selectively form D-glycero-beta-D-manno-heptose-1,7-bisphosphate. In terms of biological role, catalyzes the ADP transfer from ATP to D-glycero-beta-D-manno-heptose 1-phosphate, yielding ADP-D-glycero-beta-D-manno-heptose. The chain is Bifunctional protein HldE from Actinobacillus succinogenes (strain ATCC 55618 / DSM 22257 / CCUG 43843 / 130Z).